Here is a 315-residue protein sequence, read N- to C-terminus: Methionyl-tRNA formyltransferase (315 aa).

Residue 112-115 (SLLP) coordinates (6S)-5,6,7,8-tetrahydrofolate.

This sequence belongs to the Fmt family.

It carries out the reaction L-methionyl-tRNA(fMet) + (6R)-10-formyltetrahydrofolate = N-formyl-L-methionyl-tRNA(fMet) + (6S)-5,6,7,8-tetrahydrofolate + H(+). In terms of biological role, attaches a formyl group to the free amino group of methionyl-tRNA(fMet). The formyl group appears to play a dual role in the initiator identity of N-formylmethionyl-tRNA by promoting its recognition by IF2 and preventing the misappropriation of this tRNA by the elongation apparatus. The polypeptide is Methionyl-tRNA formyltransferase (Leptospira interrogans serogroup Icterohaemorrhagiae serovar copenhageni (strain Fiocruz L1-130)).